The sequence spans 341 residues: Terpene synthase 9 (341 aa).

The DDxx(x)D/E motif motif lies at 81–86 (DDILDS). An NDxxSxxxD/E motif motif is present at residues 222–230 (NDMASYCKE).

This sequence belongs to the terpene synthase family.

It catalyses the reaction (2E,6E)-farnesyl diphosphate = (1S,2S,4R)-beta-elemene + diphosphate. It carries out the reaction (2E,6E)-farnesyl diphosphate = germacrene D + diphosphate. Functionally, terpene synthase that converts its substrate farnesyl diphosphate (FPP) into the sesquiterpenes beta-elemene, germacrene D and a yet unidentified sesquiterpene. The polypeptide is Terpene synthase 9 (Dictyostelium purpureum (Slime mold)).